Consider the following 729-residue polypeptide: Phosphoribosylformylglycinamidine synthase subunit PurL (729 aa).

Residue H54 is part of the active site. 2 residues coordinate ATP: Y57 and K96. A Mg(2+)-binding site is contributed by E98. Substrate is bound by residues 99 to 102 (SHNH) and R121. Residue H100 is the Proton acceptor of the active site. D122 is a binding site for Mg(2+). A substrate-binding site is contributed by Q245. Residue D273 participates in Mg(2+) binding. Residue 317-319 (ETQ) coordinates substrate. Positions 495 and 532 each coordinate ATP. Mg(2+) is bound at residue N533. S535 provides a ligand contact to substrate.

This sequence belongs to the FGAMS family. In terms of assembly, monomer. Part of the FGAM synthase complex composed of 1 PurL, 1 PurQ and 2 PurS subunits.

The protein resides in the cytoplasm. The catalysed reaction is N(2)-formyl-N(1)-(5-phospho-beta-D-ribosyl)glycinamide + L-glutamine + ATP + H2O = 2-formamido-N(1)-(5-O-phospho-beta-D-ribosyl)acetamidine + L-glutamate + ADP + phosphate + H(+). It functions in the pathway purine metabolism; IMP biosynthesis via de novo pathway; 5-amino-1-(5-phospho-D-ribosyl)imidazole from N(2)-formyl-N(1)-(5-phospho-D-ribosyl)glycinamide: step 1/2. Functionally, part of the phosphoribosylformylglycinamidine synthase complex involved in the purines biosynthetic pathway. Catalyzes the ATP-dependent conversion of formylglycinamide ribonucleotide (FGAR) and glutamine to yield formylglycinamidine ribonucleotide (FGAM) and glutamate. The FGAM synthase complex is composed of three subunits. PurQ produces an ammonia molecule by converting glutamine to glutamate. PurL transfers the ammonia molecule to FGAR to form FGAM in an ATP-dependent manner. PurS interacts with PurQ and PurL and is thought to assist in the transfer of the ammonia molecule from PurQ to PurL. The sequence is that of Phosphoribosylformylglycinamidine synthase subunit PurL from Staphylococcus aureus (strain Mu3 / ATCC 700698).